The chain runs to 207 residues: dTTP/UTP pyrophosphatase (207 aa).

The active-site Proton acceptor is the Asp-79.

Belongs to the Maf family. YhdE subfamily. The cofactor is a divalent metal cation.

It localises to the cytoplasm. It catalyses the reaction dTTP + H2O = dTMP + diphosphate + H(+). It carries out the reaction UTP + H2O = UMP + diphosphate + H(+). Functionally, nucleoside triphosphate pyrophosphatase that hydrolyzes dTTP and UTP. May have a dual role in cell division arrest and in preventing the incorporation of modified nucleotides into cellular nucleic acids. This chain is dTTP/UTP pyrophosphatase, found in Rhodopseudomonas palustris (strain HaA2).